Reading from the N-terminus, the 363-residue chain is L-serine dehydratase/L-threonine deaminase (363 aa).

The residue at position 2 (alanine 2) is an N-acetylalanine. The residue at position 41 (lysine 41) is an N6-(pyridoxal phosphate)lysine. Positions 74 to 98 (RGRSHSGDEQPHVRSQALLPDTPSP) are disordered. Proline 164 provides a ligand contact to pyridoxal 5'-phosphate.

This sequence belongs to the serine/threonine dehydratase family. In terms of assembly, homodimer. It depends on pyridoxal 5'-phosphate as a cofactor. Predominantly expressed in the periportal regions of the liver.

It is found in the cytoplasm. The enzyme catalyses L-serine = pyruvate + NH4(+). The catalysed reaction is L-threonine = 2-oxobutanoate + NH4(+). The protein operates within carbohydrate biosynthesis; gluconeogenesis. Functionally, catalyzes the pyridoxal-phosphate-dependent dehydrative deamination of L-threonine and L-serine to ammonia and alpha-ketobutyrate and pyruvate, respectively. The polypeptide is L-serine dehydratase/L-threonine deaminase (Sds) (Rattus norvegicus (Rat)).